Here is a 150-residue protein sequence, read N- to C-terminus: Small ribosomal subunit protein uS19y (150 aa).

The protein belongs to the universal ribosomal protein uS19 family.

It is found in the cytoplasm. The polypeptide is Small ribosomal subunit protein uS19y (RPS15C) (Arabidopsis thaliana (Mouse-ear cress)).